The chain runs to 87 residues: Small ribosomal subunit protein uS15 (87 aa).

Belongs to the universal ribosomal protein uS15 family. Part of the 30S ribosomal subunit. Forms a bridge to the 50S subunit in the 70S ribosome, contacting the 23S rRNA.

One of the primary rRNA binding proteins, it binds directly to 16S rRNA where it helps nucleate assembly of the platform of the 30S subunit by binding and bridging several RNA helices of the 16S rRNA. Its function is as follows. Forms an intersubunit bridge (bridge B4) with the 23S rRNA of the 50S subunit in the ribosome. The polypeptide is Small ribosomal subunit protein uS15 (Clostridium botulinum (strain Eklund 17B / Type B)).